Reading from the N-terminus, the 140-residue chain is ATP synthase epsilon chain (140 aa).

It belongs to the ATPase epsilon chain family. In terms of assembly, F-type ATPases have 2 components, CF(1) - the catalytic core - and CF(0) - the membrane proton channel. CF(1) has five subunits: alpha(3), beta(3), gamma(1), delta(1), epsilon(1). CF(0) has three main subunits: a, b and c.

Its subcellular location is the cell inner membrane. Its function is as follows. Produces ATP from ADP in the presence of a proton gradient across the membrane. This chain is ATP synthase epsilon chain, found in Neisseria meningitidis serogroup A / serotype 4A (strain DSM 15465 / Z2491).